The chain runs to 127 residues: Large ribosomal subunit protein bL19 (127 aa).

This sequence belongs to the bacterial ribosomal protein bL19 family.

This protein is located at the 30S-50S ribosomal subunit interface and may play a role in the structure and function of the aminoacyl-tRNA binding site. This Bradyrhizobium sp. (strain BTAi1 / ATCC BAA-1182) protein is Large ribosomal subunit protein bL19.